Here is a 46-residue protein sequence, read N- to C-terminus: Phoratoxin (46 aa).

Cystine bridges form between C3–C40, C4–C32, and C16–C26. Residue H46 is modified to Blocked carboxyl end (His).

This sequence belongs to the plant thionin (TC 1.C.44) family.

It localises to the secreted. Its function is as follows. Thionins are small plant proteins which are toxic to animal cells. They seem to exert their toxic effect at the level of the cell membrane. Their precise function is not known. The chain is Phoratoxin from Phoradendron leucarpum subsp. tomentosum (California mistletoe).